The sequence spans 830 residues: Dimethylglycine oxidase (830 aa).

FAD is bound by residues 14–15 (IV), 35–36 (DQ), 45–48 (STSH), Leu52, and Val174. His48 bears the Pros-8alpha-FAD histidine mark. Active-site residues include His225 and Tyr259. Residues Tyr259 and 360-363 (VWVT) each bind FAD. Tyr539 lines the (6S)-5,6,7,8-tetrahydrofolate pocket. The active-site For 5,10-methylenetetrahydrofolate synthesis activity is Asp552. (6S)-5,6,7,8-tetrahydrofolate-binding positions include Thr554, Gly566, and 658-660 (ELY).

The protein belongs to the GcvT family. Requires FAD as cofactor.

It catalyses the reaction N,N-dimethylglycine + O2 + H2O = sarcosine + formaldehyde + H2O2. The enzyme catalyses N,N-dimethylglycine + (6S)-5,6,7,8-tetrahydrofolate + O2 = sarcosine + (6R)-5,10-methylene-5,6,7,8-tetrahydrofolate + H2O2. Its function is as follows. Catalyzes the oxidative demethylation of N,N-dimethylglycine to yield sarcosine, formaldehyde and hydrogen peroxide. The oxidation of dimethylglycine is coupled to the synthesis of 5,10-methylenetetrahydrofolate through an unusual substrate channeling mechanism. This channeling occurs by nonbiased diffusion of the iminium intermediate through a large solvent cavity connecting active site 1 (N-terminus) and active site 2 (C-terminus). The synthesis of 5,10-methylenetetrahydrofolate (at active site 2) prevents the accumulation of formaldehyde, formed by hydrolysis of the iminium intermediate product (at active site 1). Does not oxidize sarcosine. In Arthrobacter globiformis, this protein is Dimethylglycine oxidase (dmg).